The sequence spans 72 residues: MSKVCVLTGKRPKYGNTVSHANNHRRTRFEPNLHTKRIWIDEEKRWAKVKLSAKAMKIIAKTGTAELAKLLK.

Belongs to the bacterial ribosomal protein bL28 family.

This chain is Large ribosomal subunit protein bL28, found in Chlorobium luteolum (strain DSM 273 / BCRC 81028 / 2530) (Pelodictyon luteolum).